The chain runs to 88 residues: UPF0297 protein BcerKBAB4_4234 (88 aa).

Belongs to the UPF0297 family.

In Bacillus mycoides (strain KBAB4) (Bacillus weihenstephanensis), this protein is UPF0297 protein BcerKBAB4_4234.